The sequence spans 755 residues: Catalase-peroxidase (755 aa).

Positions 91–245 form a cross-link, tryptophyl-tyrosyl-methioninium (Trp-Tyr) (with M-271); it reads WHSAGTYRTA…LAAVQMGLIY (155 aa). The active-site Proton acceptor is the histidine 92. Positions 193–229 are disordered; that stretch reads DNRYGKDPESMQPPGEGTLVAEPAEHGNEESRTNQGE. Over residues 215 to 224 the composition is skewed to basic and acidic residues; sequence PAEHGNEESR. Residues 245-271 constitute a cross-link (tryptophyl-tyrosyl-methioninium (Tyr-Met) (with W-91)); it reads YVNPEGPEGNPDPVASAKDIRETFGRM. A heme-binding site is contributed by histidine 286.

This sequence belongs to the peroxidase family. Peroxidase/catalase subfamily. Homodimer or homotetramer. The cofactor is heme b. In terms of processing, formation of the three residue Trp-Tyr-Met cross-link is important for the catalase, but not the peroxidase activity of the enzyme.

It carries out the reaction H2O2 + AH2 = A + 2 H2O. The enzyme catalyses 2 H2O2 = O2 + 2 H2O. Functionally, bifunctional enzyme with both catalase and broad-spectrum peroxidase activity. This Pseudomonas fluorescens (strain Pf0-1) protein is Catalase-peroxidase.